The following is a 196-amino-acid chain: Pyridoxal 5'-phosphate synthase subunit PdxT (196 aa).

47 to 49 (GES) is an L-glutamine binding site. Residue Cys79 is the Nucleophile of the active site. L-glutamine-binding positions include Arg106 and 134 to 135 (IR). Active-site charge relay system residues include His170 and Glu172.

It belongs to the glutaminase PdxT/SNO family. In the presence of PdxS, forms a dodecamer of heterodimers. Only shows activity in the heterodimer.

It catalyses the reaction aldehydo-D-ribose 5-phosphate + D-glyceraldehyde 3-phosphate + L-glutamine = pyridoxal 5'-phosphate + L-glutamate + phosphate + 3 H2O + H(+). The enzyme catalyses L-glutamine + H2O = L-glutamate + NH4(+). Its pathway is cofactor biosynthesis; pyridoxal 5'-phosphate biosynthesis. Catalyzes the hydrolysis of glutamine to glutamate and ammonia as part of the biosynthesis of pyridoxal 5'-phosphate. The resulting ammonia molecule is channeled to the active site of PdxS. This chain is Pyridoxal 5'-phosphate synthase subunit PdxT, found in Bacillus mycoides (strain KBAB4) (Bacillus weihenstephanensis).